A 590-amino-acid polypeptide reads, in one-letter code: G protein-coupled receptor kinase 5 (590 aa).

Positions 1 to 185 (MELENIVANT…LERQPVTKNT (185 aa)) are N-terminal. The interval 20-39 (GGKRKGKSKKWKEILKFPHI) is interaction with calmodulin. The RGS domain occupies 53–171 (YCSLCDKQPV…LDSMYFDRFL (119 aa)). One can recognise a Protein kinase domain in the interval 186 to 448 (FRQYRVLGKG…AAEVKRHPFF (263 aa)). ATP-binding positions include 192–200 (LGKGGFGEV) and Lys215. Asp311 functions as the Proton acceptor in the catalytic mechanism. The Nuclear localization signal signature appears at 388–395 (RKEKVKRE). One can recognise an AGC-kinase C-terminal domain in the interval 449 to 514 (RNMNFKRLEA…GSVPIPWQSE (66 aa)). Ser484 carries the phosphoserine; by autocatalysis modification. Thr485 bears the Phosphothreonine; by autocatalysis mark. The tract at residues 546–565 (PKKGLLQRLFKRQHQNNSKS) is sufficient for membrane localization. A disordered region spans residues 554-590 (LFKRQHQNNSKSSPNSKTSFNHHINSNHVSSNSTGSS). The segment covering 561-590 (NNSKSSPNSKTSFNHHINSNHVSSNSTGSS) has biased composition (low complexity). Ser579 carries the post-translational modification Phosphoserine.

It belongs to the protein kinase superfamily. AGC Ser/Thr protein kinase family. GPRK subfamily. Interacts with ST13 (via the C-terminus 303-319 AA). Interacts with TP53/p53. Interacts with HTR4 (via C-terminus 330-346 AA); this interaction is promoted by 5-HT (serotonin). Interacts with HDAC5. Interacts with GIT1. Post-translationally, autophosphorylated. Autophosphorylation may play a critical role in the regulation of GRK5 kinase activity. As to expression, highest levels in lung, heart, retina, lingual epithelium. Very little in brain, liver, kidney.

The protein resides in the cytoplasm. The protein localises to the nucleus. Its subcellular location is the cell membrane. It carries out the reaction [G-protein-coupled receptor] + ATP = [G-protein-coupled receptor]-phosphate + ADP + H(+). Its activity is regulated as follows. Inhibited by calmodulin with an IC(50) of 50 nM. Calmodulin inhibits GRK5 association with receptor and phospholipid. In terms of biological role, serine/threonine kinase that phosphorylates preferentially the activated forms of a variety of G-protein-coupled receptors (GPCRs). Such receptor phosphorylation initiates beta-arrestin-mediated receptor desensitization, internalization, and signaling events leading to their down-regulation. Phosphorylates a variety of GPCRs, including adrenergic receptors (Beta-2 adrenergic receptor), muscarinic acetylcholine receptors (more specifically Gi-coupled M2/M4 subtypes), dopamine receptors and opioid receptors. In addition to GPCRs, also phosphorylates various substrates: Hsc70-interacting protein/ST13, TP53/p53, HDAC5, and arrestin-1/ARRB1. Phosphorylation of ARRB1 by GRK5 inhibits G-protein independent MAPK1/MAPK3 signaling downstream of 5HT4-receptors. Phosphorylation of HDAC5, a repressor of myocyte enhancer factor 2 (MEF2) leading to nuclear export of HDAC5 and allowing MEF2-mediated transcription. Phosphorylation of TP53/p53, a crucial tumor suppressor, inhibits TP53/p53-mediated apoptosis. Phosphorylation of ST13 regulates internalization of the chemokine receptor. Phosphorylates rhodopsin (RHO) (in vitro) and a non G-protein-coupled receptor, LRP6 during Wnt signaling (in vitro). The sequence is that of G protein-coupled receptor kinase 5 (GRK5) from Bos taurus (Bovine).